The primary structure comprises 776 residues: Transcription activator of gluconeogenesis HCAG_03671 (776 aa).

The interval 1-70 (MTASTQNGSP…NAKDPLRPRR (70 aa)) is disordered. 2 stretches are compositionally biased toward polar residues: residues 21–41 (NQESKNMTANPADASESQSPA) and 50–60 (ENGQKHTSTAA). A DNA-binding region (zn(2)-C6 fungal-type) is located at residues 77–105 (CFACQRAHLTCGDERPCQRCIKRGLQDAC). Disordered stretches follow at residues 140-159 (RTNASQQQNGPNSNSNKDSR), 179-248 (TQAK…PFGA), 286-351 (GAGD…NIYN), 556-593 (NLNVNTGGSSPRGSGTFTPRNGNGVDPHSGMSASGGGG), and 651-726 (REAQ…SPKQ). Residues 142-155 (NASQQQNGPNSNSN) are compositionally biased toward low complexity. Polar residues predominate over residues 195–217 (MQDTSINPSAFQAPSPTSTPNFD). Low complexity predominate over residues 218-229 (LSSNPPNRNLSS). Composition is skewed to polar residues over residues 230–244 (AMTQTPSSASNQTQD), 292–322 (PSDSATQRGSIGRSSGTFTAQNFGDSTNTQP), 334–351 (WNPSGQSQTNPRNNNIYN), and 557–576 (LNVNTGGSSPRGSGTFTPRN). Positions 657–669 (GPDGKGGGGGGGD) are enriched in gly residues. Positions 670 to 714 (VATTAATTSTSTSNGANSSGHANANRNNTNPNNSSPPSSSSAAAA) are enriched in low complexity.

It belongs to the ERT1/acuK family.

The protein localises to the nucleus. Transcription factor which regulates nonfermentable carbon utilization. Activator of gluconeogenetic genes. This chain is Transcription activator of gluconeogenesis HCAG_03671, found in Ajellomyces capsulatus (strain NAm1 / WU24) (Darling's disease fungus).